Here is a 232-residue protein sequence, read N- to C-terminus: tRNA (guanine-N(7)-)-methyltransferase (232 aa).

S-adenosyl-L-methionine-binding residues include Glu-63, Glu-88, Asp-115, and Asp-137. The active site involves Asp-137. Residues Lys-141, Asp-173, and 211-214 (TRYE) each bind substrate.

Belongs to the class I-like SAM-binding methyltransferase superfamily. TrmB family.

It catalyses the reaction guanosine(46) in tRNA + S-adenosyl-L-methionine = N(7)-methylguanosine(46) in tRNA + S-adenosyl-L-homocysteine. It functions in the pathway tRNA modification; N(7)-methylguanine-tRNA biosynthesis. Functionally, catalyzes the formation of N(7)-methylguanine at position 46 (m7G46) in tRNA. The polypeptide is tRNA (guanine-N(7)-)-methyltransferase (Chelativorans sp. (strain BNC1)).